A 471-amino-acid polypeptide reads, in one-letter code: Ribulose bisphosphate carboxylase large chain (471 aa).

Substrate contacts are provided by Asn-119 and Thr-169. The active-site Proton acceptor is the Lys-171. Lys-173 lines the substrate pocket. Mg(2+)-binding residues include Lys-197, Asp-199, and Glu-200. N6-carboxylysine is present on Lys-197. Catalysis depends on His-290, which acts as the Proton acceptor. Substrate contacts are provided by Arg-291, His-323, and Ser-375.

This sequence belongs to the RuBisCO large chain family. Type I subfamily. In terms of assembly, heterohexadecamer of 8 large chains and 8 small chains; disulfide-linked. The disulfide link is formed within the large subunit homodimers. It depends on Mg(2+) as a cofactor. The disulfide bond which can form in the large chain dimeric partners within the hexadecamer appears to be associated with oxidative stress and protein turnover.

It localises to the carboxysome. The enzyme catalyses 2 (2R)-3-phosphoglycerate + 2 H(+) = D-ribulose 1,5-bisphosphate + CO2 + H2O. The catalysed reaction is D-ribulose 1,5-bisphosphate + O2 = 2-phosphoglycolate + (2R)-3-phosphoglycerate + 2 H(+). In terms of biological role, ruBisCO catalyzes two reactions: the carboxylation of D-ribulose 1,5-bisphosphate, the primary event in carbon dioxide fixation, as well as the oxidative fragmentation of the pentose substrate in the photorespiration process. Both reactions occur simultaneously and in competition at the same active site. The protein is Ribulose bisphosphate carboxylase large chain of Microcystis aeruginosa (strain NIES-843 / IAM M-2473).